We begin with the raw amino-acid sequence, 279 residues long: Probable diacylglycerol pyrophosphate phosphatase 1 (279 aa).

Topologically, residues 1–17 (MEAVGKHVKLFWNVYSD) are lumenal. The helical transmembrane segment at 18-38 (YAVLIAISLSYFVFDVLMLPF) threads the bilayer. Topologically, residues 39–58 (TRQFSLEDITISHPFALHEQ) are cytoplasmic. A helical membrane pass occupies residues 59–79 (VPTKYLGIICVFFPALVLYGF). The Lumenal segment spans residues 80–86 (GKLRNNS). The chain crosses the membrane as a helical span at residues 87 to 107 (LLFWKSLMGLLYSTMVCGLCV). At 108–163 (SLLKNAVGRPRPDFLARCQPFESTPKTGLVDVLSCSVPWSDKVLQDGFRSFPSGHT) the chain is on the cytoplasmic side. Residues 111–119 (KNAVGRPRP) are phosphatase sequence motif I. Residues 159-162 (PSGH) form a phosphatase sequence motif II region. The chain crosses the membrane as a helical span at residues 164–184 (SFSFAGLGFLAIFLAGQLKMF). At 185-187 (RNK) the chain is on the lumenal side. The chain crosses the membrane as a helical span at residues 188-208 (TSSWKVVVPLVPLSIASWIGL). The Cytoplasmic portion of the chain corresponds to 209–220 (SRSQDYRHHKED). The tract at residues 209 to 220 (SRSQDYRHHKED) is phosphatase sequence motif III. Residues 221–241 (IAVGALFGFAIAYVVYRQLFP) form a helical membrane-spanning segment. Residues 242 to 279 (PLDHHNADILYVQAELDEGYTNVHSAGNSSATNAEQMV) lie on the Lumenal side of the membrane.

The protein belongs to the PA-phosphatase related phosphoesterase family.

It localises to the vacuole membrane. Its subcellular location is the endoplasmic reticulum membrane. The enzyme catalyses a 1,2-diacyl-sn-glycerol 3-diphosphate + H2O = a 1,2-diacyl-sn-glycero-3-phosphate + phosphate + H(+). It carries out the reaction a 1,2-diacyl-sn-glycero-3-phosphate + H2O = a 1,2-diacyl-sn-glycerol + phosphate. In terms of biological role, catalyzes the dephosphorylation of diacylglycerol phosphate (DGPP) to phosphatidate (PA) and the subsequent dephosphorylation of PA to diacylglycerol (DAG). This chain is Probable diacylglycerol pyrophosphate phosphatase 1 (dpp1), found in Schizosaccharomyces pombe (strain 972 / ATCC 24843) (Fission yeast).